The chain runs to 730 residues: DNA ligase (730 aa).

The disordered stretch occupies residues 1–23; sequence MAGEQHAQPTSVPAEAREKHAQL. Residues 44 to 48, 93 to 94, and E124 contribute to the NAD(+) site; these read DAEFD and SL. K126 functions as the N6-AMP-lysine intermediate in the catalytic mechanism. NAD(+) contacts are provided by R147, E184, K300, and K324. The Zn(2+) site is built by C418, C421, C437, and C443. A BRCT domain is found at 638–727; it reads EGPRPLEGLT…PEAAAEVALP (90 aa).

The protein belongs to the NAD-dependent DNA ligase family. LigA subfamily. It depends on Mg(2+) as a cofactor. Mn(2+) serves as cofactor.

The catalysed reaction is NAD(+) + (deoxyribonucleotide)n-3'-hydroxyl + 5'-phospho-(deoxyribonucleotide)m = (deoxyribonucleotide)n+m + AMP + beta-nicotinamide D-nucleotide.. DNA ligase that catalyzes the formation of phosphodiester linkages between 5'-phosphoryl and 3'-hydroxyl groups in double-stranded DNA using NAD as a coenzyme and as the energy source for the reaction. It is essential for DNA replication and repair of damaged DNA. The sequence is that of DNA ligase from Streptomyces avermitilis (strain ATCC 31267 / DSM 46492 / JCM 5070 / NBRC 14893 / NCIMB 12804 / NRRL 8165 / MA-4680).